A 1059-amino-acid polypeptide reads, in one-letter code: Cellulose synthase catalytic subunit A [UDP-forming] (1059 aa).

2 disordered regions span residues 1–159 (MDRN…RFDT) and 174–220 (MRQH…KHVA). Over residues 15–36 (NNINSSGGSYNNSMNNSSNNIG) the composition is skewed to low complexity. Polar residues-rich tracts occupy residues 40 to 57 (GNNQSSRNLKPKPSQSNL) and 142 to 154 (NSPSSEYGTTSGG). Residues 181-194 (QEQQQQQQQQQQQQ) show a composition bias toward low complexity. Positions 204–219 (QKKKPSSMQLSKKKHV) are enriched in basic residues. 3 helical membrane-spanning segments follow: residues 246-266 (FSHAILQATMAVFLIWNIFYF), 280-300 (ITFSYSILFIIVEFISFLGSA), and 306-323 (FTNPCTFVLVVTLEQILA). The tract at residues 328-628 (KHPTVMMYVC…FLGLLDADQQ (301 aa)) is catalytic subdomain A. Aspartate 370 is an active-site residue. Positions 624 and 626 each coordinate substrate. The tract at residues 701 to 761 (QPLYDIGGIM…EQRKRWAQGA (61 aa)) is catalytic subdomain B. Residue aspartate 717 is part of the active site. The next 2 membrane-spanning stretches (helical) occupy residues 790–810 (IYPFLSPTAFFYGASPLIMSI) and 813–833 (VPIVVKDPIIFILVGMIPVMV). Positions 933–953 (DNAQESSGKHKAEQSFRTSNK) are disordered. The span at 939–953 (SGKHKAEQSFRTSNK) shows a compositional bias: basic and acidic residues. 3 helical membrane-spanning segments follow: residues 963–983 (LFLPNIILFVVNILAMMSAVL), 993–1013 (WLLVVVAGFSFSTLWHLWSFI), and 1035–1055 (IVLFLVLGFLVLLFVDVKVCI).

This sequence belongs to the glycosyltransferase 2 family. Requires Mg(2+) as cofactor.

The protein localises to the membrane. It carries out the reaction [(1-&gt;4)-beta-D-glucosyl](n) + UDP-alpha-D-glucose = [(1-&gt;4)-beta-D-glucosyl](n+1) + UDP + H(+). The protein operates within glycan metabolism; amoeba cellulose biosynthesis. Functionally, catalytic subunit of cellulose synthase. It incorporates glucose from uridine 5'-diphosphate glucose (UDP-alpha-D-glucose) to cellulose (a (1-&gt;4)-beta-D-glucan), which is produced as an extracellular component for mechanical and chemical protection at the onset of the stalk formation, when the cells exhibit multicellular behavior during culmination. This Dictyostelium discoideum (Social amoeba) protein is Cellulose synthase catalytic subunit A [UDP-forming] (dcsA).